The sequence spans 382 residues: Cysteine desulfurase IscS 1 (382 aa).

Asparagine 149 is a pyridoxal 5'-phosphate binding site. Cysteine 321 (cysteine persulfide intermediate) is an active-site residue. Cysteine 321 is a binding site for [2Fe-2S] cluster.

Belongs to the class-V pyridoxal-phosphate-dependent aminotransferase family. NifS/IscS subfamily. As to quaternary structure, homodimer. Forms a heterotetramer with IscU, interacts with other sulfur acceptors. Pyridoxal 5'-phosphate serves as cofactor.

The protein localises to the cytoplasm. The enzyme catalyses (sulfur carrier)-H + L-cysteine = (sulfur carrier)-SH + L-alanine. It participates in cofactor biosynthesis; iron-sulfur cluster biosynthesis. In terms of biological role, master enzyme that delivers sulfur to a number of partners involved in Fe-S cluster assembly, tRNA modification or cofactor biosynthesis. Catalyzes the removal of elemental sulfur atoms from cysteine to produce alanine. Functions as a sulfur delivery protein for Fe-S cluster synthesis onto IscU, an Fe-S scaffold assembly protein, as well as other S acceptor proteins. The polypeptide is Cysteine desulfurase IscS 1 (Archaeoglobus fulgidus (strain ATCC 49558 / DSM 4304 / JCM 9628 / NBRC 100126 / VC-16)).